The sequence spans 492 residues: G protein-activated inward rectifier potassium channel 1 (492 aa).

The Cytoplasmic segment spans residues 1–72; sequence MSALRRKLGD…LFTTLVDLKW (72 aa). Residues 16 to 35 are disordered; that stretch reads STSASGGGLPPPRAAPRGKR. A helical transmembrane segment spans residues 73–97; that stretch reads RWNLFIFVLTYTVAWLFMASMWWVI. The Extracellular segment spans residues 98 to 121; it reads AYMRGDLNKAHDDSYTPCVANVYN. Residues 122–133 constitute an intramembrane region (helical; Pore-forming); it reads FPSAFLFFIETE. The segment at residues 134–140 is an intramembrane region (pore-forming); the sequence is ATIGYGY. The short motif at 135 to 140 is the Selectivity filter element; it reads TIGYGY. Residues 141–149 lie on the Extracellular side of the membrane; the sequence is RYITDKCPE. Residues 150–171 form a helical membrane-spanning segment; sequence GIILFLFQSILGSIVDAFLIGC. The Cytoplasmic segment spans residues 172–492; it reads MFIKMSQPKK…LRKMNSDRFT (321 aa). The tract at residues 174-201 is polyphosphoinositide (PIP2)-binding; the sequence is IKMSQPKKRAETLMFSEHAAISMRDGKL. The disordered stretch occupies residues 452-492; the sequence is SDPMSQSVADLPPKLQKLSGGGRMEGNLPPKLRKMNSDRFT.

The protein belongs to the inward rectifier-type potassium channel (TC 1.A.2.1) family. KCNJ3 subfamily. Associates with KCNJ5/GIRK4 or KCNJ6/GIRK2 or KCNJ9/GIRK3 to form a G-protein activated heteromultimer pore-forming unit. The resulting inward current is much larger.

The protein resides in the membrane. The catalysed reaction is K(+)(in) = K(+)(out). Heteromultimer composed of KCNJ3/GIRK1 and KCNJ5/GIRK4 is activated by phosphatidylinositol 4,5 biphosphate (PtdIns(4,5)P2). Inward rectifier potassium channels are characterized by a greater tendency to allow potassium to flow into the cell rather than out of it. Their voltage dependence is regulated by the concentration of extracellular potassium; as external potassium is raised, the voltage range of the channel opening shifts to more positive voltages. The inward rectification is mainly due to the blockage of outward current by internal magnesium. This potassium channel is controlled by G proteins. This receptor plays a crucial role in regulating the heartbeat. This is G protein-activated inward rectifier potassium channel 1 (KCNJ3) from Gallus gallus (Chicken).